Reading from the N-terminus, the 689-residue chain is FACT complex subunit ssrp1-B (689 aa).

Disordered regions lie at residues 434–565 (DNKS…KRAT) and 592–689 (KAGA…GESD). A compositionally biased stretch (acidic residues) spans 461–477 (EQDDDSDDESTDEDYDL). 4 stretches are compositionally biased toward basic and acidic residues: residues 478-491 (DKDM…KDSS), 523-532 (IEPKKKESKE), 538-563 (EKKE…EPKR), and 601-628 (SADD…EYKK). Residues 561–627 (PKRATTAYII…RYEAEMKEYK (67 aa)) constitute a DNA-binding region (HMG box). A compositionally biased stretch (polar residues) spans 638-650 (GPSTKKSSDQSPG).

It belongs to the SSRP1 family. As to quaternary structure, component of the FACT complex, a stable heterodimer of hmg-3 and spt-16. The FACT complex may also include hmg-4 instead of hmg-3. In terms of tissue distribution, expressed in the germline.

It is found in the nucleus. It localises to the chromosome. Component of the FACT complex, a general chromatin factor that acts to reorganize nucleosomes. The FACT complex is involved in multiple processes that require DNA as a template such as mRNA elongation, DNA replication and DNA repair. During transcription elongation the FACT complex acts as a histone chaperone that both destabilizes and restores nucleosomal structure. It facilitates the passage of RNA polymerase II and transcription by promoting the dissociation of one histone H2A-H2B dimer from the nucleosome, then subsequently promotes the reestablishment of the nucleosome following the passage of RNA polymerase II. Binds specifically to double-stranded DNA. In embryos, may function redundantly with hmg-4 to promote cell cycle progression and development of the anterior pharynx. In the germline, acts non-redundantly with hmg-4 to play a role in oocyte development. This Caenorhabditis elegans protein is FACT complex subunit ssrp1-B.